The primary structure comprises 67 residues: Alpha-conotoxin-like Qc1.1a (67 aa).

The N-terminal stretch at 1 to 21 (MGMRMMFTMFLLVVLAITVVS) is a signal peptide. A propeptide spanning residues 22 to 46 (FTSDHASDGRNTAANDKASNLMALR) is cleaved from the precursor. 2 cysteine pairs are disulfide-bonded: Cys-49–Cys-55 and Cys-50–Cys-63. Residues 51–53 (PDP) form a lacks the Ser-Xaa-Pro motif that is crucial for potent interaction with nAChR region.

Belongs to the conotoxin A superfamily. In terms of tissue distribution, expressed by the venom duct.

It localises to the secreted. Functionally, alpha-conotoxins act on postsynaptic membranes, they bind to the nicotinic acetylcholine receptors (nAChR) and thus inhibit them. Has possibly a distinct nAChR binding mode from other alpha-conotoxins, due to a different three residue motif (lacks the Ser-Xaa-Pro motif). This chain is Alpha-conotoxin-like Qc1.1a, found in Conus quercinus (Oak cone).